The sequence spans 230 residues: 2,3-bisphosphoglycerate-dependent phosphoglycerate mutase (230 aa).

Substrate-binding positions include arginine 8–asparagine 15, threonine 21–glycine 22, arginine 60, glutamate 87–tyrosine 90, lysine 98, arginine 114–arginine 115, and glycine 183–asparagine 184. Histidine 9 serves as the catalytic Tele-phosphohistidine intermediate. Residue glutamate 87 is the Proton donor/acceptor of the active site.

Belongs to the phosphoglycerate mutase family. BPG-dependent PGAM subfamily.

The catalysed reaction is (2R)-2-phosphoglycerate = (2R)-3-phosphoglycerate. The protein operates within carbohydrate degradation; glycolysis; pyruvate from D-glyceraldehyde 3-phosphate: step 3/5. Its function is as follows. Catalyzes the interconversion of 2-phosphoglycerate and 3-phosphoglycerate. In Streptococcus uberis (strain ATCC BAA-854 / 0140J), this protein is 2,3-bisphosphoglycerate-dependent phosphoglycerate mutase.